Reading from the N-terminus, the 527-residue chain is Optineurin (527 aa).

Disordered stretches follow at residues 1–32 (MSHQ…HPNL) and 101–143 (SHEN…KDQL). The stretch at 38–170 (EELLQQMKEL…VSELQLKLNS (133 aa)) forms a coiled coil. The tract at residues 58-209 (MKLNNQAMKG…GPTRTVSTSR (152 aa)) is interaction with Rab8. The LIR signature appears at 176–181 (DSFVEI). Residue S177 is modified to Phosphoserine; by TBK1. A compositionally biased stretch (basic and acidic residues) spans 186-197 (GEAEGSVKEIKH). Disordered regions lie at residues 186 to 214 (GEAE…LSKY) and 262 to 292 (SDFE…EKGL). S198 bears the Phosphoserine mark. A compositionally biased stretch (polar residues) spans 201–210 (PTRTVSTSRA). Residues 239–458 (CLREGNQKVE…LLKENDAFED (220 aa)) adopt a coiled-coil conformation. Composition is skewed to basic and acidic residues over residues 262 to 274 (SDFE…RSEI) and 281 to 292 (STEKENDEEKGL). Positions 361–527 (TRKESEKVDR…LQIHVMDCII (167 aa)) are interaction with HD. The interaction with MYO6 stretch occupies residues 362 to 470 (RKESEKVDRA…RQSLMEMQSR (109 aa)). Residues 424 to 429 (DFHAER) carry the UBAN motif. S476 bears the Phosphoserine mark. The CCHC NOA-type zinc finger occupies 497–527 (QRNIPIHSCPKCGEVLPDIDTLQIHVMDCII). Zn(2+) contacts are provided by C505, C508, H521, and C525.

As to quaternary structure, self-associates. Interacts with HD. Interacts with GTF3A. Interacts with MYO6. Interacts (via UBAN) with ubiquitinated TFRC. Interacts with GTP-bound Rab8 (RAB8A and/or RAB8B). Interacts with TBC1D17. Interacts with TBK1. Interacts with TRAF3. Binds to linear ubiquitin chains. Interacts with LC3 family members MAP1LC3A, MAP1LC3B, GABARAP, GABARAPL1 and GABARAPL2; OPTN phosphorylation increases the association (at least with MAP1LC3B). Interacts with RAB12; the interaction may be indirect. Interacts with TBK1; this interaction leads to the Golgi localization of TBK1 and its subsequent activation. Interacts with palmitoyltransferase ZDHHC17/HIP14; the interaction does not lead to palmitoylation of OPTN. Interacts with CYLD. Interacts with TOM1; the interaction is indirect and is mediated by MYO6, which acts as a bridge between TOM1 and OPTN. Interacts with USP12; the interaction is independent of USP12 deubiquitinase activity and may be involved in regulation of autophagic flux. Phosphorylated by TBK1, leading to restrict bacterial proliferation in case of infection.

It localises to the cytoplasm. The protein localises to the perinuclear region. Its subcellular location is the golgi apparatus. It is found in the trans-Golgi network. The protein resides in the cytoplasmic vesicle. It localises to the autophagosome. The protein localises to the recycling endosome. Plays an important role in the maintenance of the Golgi complex, in membrane trafficking, in exocytosis, through its interaction with myosin VI and Rab8. Links myosin VI to the Golgi complex and plays an important role in Golgi ribbon formation. Negatively regulates the induction of IFNB in response to RNA virus infection. Plays a neuroprotective role in the eye and optic nerve. Probably part of the TNF-alpha signaling pathway that can shift the equilibrium toward induction of cell death. May act by regulating membrane trafficking and cellular morphogenesis via a complex that contains Rab8 and huntingtin (HD). Mediates the interaction of Rab8 with the probable GTPase-activating protein TBC1D17 during Rab8-mediated endocytic trafficking, such as that of transferrin receptor (TFRC/TfR); regulates Rab8 recruitment to tubules emanating from the endocytic recycling compartment. Autophagy receptor that interacts directly with both the cargo to become degraded and an autophagy modifier of the MAP1 LC3 family; targets ubiquitin-coated bacteria (xenophagy) and appears to function in the same pathway as SQSTM1 and CALCOCO2/NDP52. In Pongo abelii (Sumatran orangutan), this protein is Optineurin (OPTN).